Reading from the N-terminus, the 137-residue chain is Glutamate mutase sigma subunit (137 aa).

Residues 3–137 form the B12-binding domain; sequence KKTIVLGVIG…ADLKEDLNIK (135 aa). Residues 13–17, H16, 61–63, and 93–97 contribute to the adenosylcob(III)alamin site; these read SDCHA, SSL, and NIVVG.

It belongs to the methylaspartate mutase GlmS subunit family. In terms of assembly, heterotetramer composed of 2 epsilon subunits (GlmE) and 2 sigma subunits (GlmS). GlmE exists as a homodimer and GlmS as a monomer. Requires adenosylcob(III)alamin as cofactor.

The enzyme catalyses (2S,3S)-3-methyl-L-aspartate = L-glutamate. It functions in the pathway amino-acid degradation; L-glutamate degradation via mesaconate pathway; acetate and pyruvate from L-glutamate: step 1/4. Catalyzes the carbon skeleton rearrangement of L-glutamate to L-threo-3-methylaspartate ((2S,3S)-3-methylaspartate). The protein is Glutamate mutase sigma subunit of Clostridium tetani (strain Massachusetts / E88).